A 782-amino-acid chain; its full sequence is Nezukol synthase KSL3 (782 aa).

Positions 529, 533, 677, and 685 each coordinate Mg(2+). Residues 529 to 533 carry the DDXXD motif motif; the sequence is DDVFD.

It belongs to the terpene synthase family. It depends on Mg(2+) as a cofactor. Highly expressed in leaves, and, at low levels, in stems, but barely in roots and flowers.

It catalyses the reaction (+)-copalyl diphosphate = miltiradiene + diphosphate. The catalysed reaction is (+)-copalyl diphosphate + H2O = nezukol + diphosphate. It participates in secondary metabolite biosynthesis; terpenoid biosynthesis. Involved in the biosynthesis of ent-kaurene diterpenoids natural products such as oridonin, miltiradiene, eriocalyxin B and nezukol, known to exhibit antitumor, anti-inflammatory and antibacterial activities. Catalyzes the conversion of (+)-copalyl diphosphate ((+)-CPP) to nezukol and miltiradiene. The reaction mechanism proceeds via the ionization of the diphosphate group of (+)-CPP, followed by formation of an intermediary pimar-15-en-8-yl(+) carbocation and neutralization of the carbocation by water capture at C-8 to yield nezukol. Can interact with ent-copalyl diphosphate (ent-CPP) but seems unable to use it as substrate. The chain is Nezukol synthase KSL3 from Isodon rubescens (Rabdosia rubescens).